The sequence spans 346 residues: Biotin synthase (346 aa).

The 219-residue stretch at 38 to 256 folds into the Radical SAM core domain; the sequence is RQVQVSTLLS…IAIARIMMPT (219 aa). Positions 53, 57, and 60 each coordinate [4Fe-4S] cluster. Residues C97, C128, C188, and R260 each coordinate [2Fe-2S] cluster.

The protein belongs to the radical SAM superfamily. Biotin synthase family. In terms of assembly, homodimer. [4Fe-4S] cluster serves as cofactor. [2Fe-2S] cluster is required as a cofactor.

It catalyses the reaction (4R,5S)-dethiobiotin + (sulfur carrier)-SH + 2 reduced [2Fe-2S]-[ferredoxin] + 2 S-adenosyl-L-methionine = (sulfur carrier)-H + biotin + 2 5'-deoxyadenosine + 2 L-methionine + 2 oxidized [2Fe-2S]-[ferredoxin]. It functions in the pathway cofactor biosynthesis; biotin biosynthesis; biotin from 7,8-diaminononanoate: step 2/2. In terms of biological role, catalyzes the conversion of dethiobiotin (DTB) to biotin by the insertion of a sulfur atom into dethiobiotin via a radical-based mechanism. This chain is Biotin synthase, found in Klebsiella pneumoniae (strain 342).